Reading from the N-terminus, the 945-residue chain is Protein translocase subunit SecA (945 aa).

ATP is bound by residues Gln-90, 108-112 (GEGKT), and Asp-509. The tract at residues 533 to 568 (VKPEDGHKPPVPLQRRSESSGFGEDKDVTTDNSKPL) is disordered. Residues 547–561 (RRSESSGFGEDKDVT) are compositionally biased toward basic and acidic residues.

This sequence belongs to the SecA family. Monomer and homodimer. Part of the essential Sec protein translocation apparatus which comprises SecA, SecYEG and auxiliary proteins SecDF. Other proteins may also be involved.

The protein localises to the cell inner membrane. Its subcellular location is the cellular thylakoid membrane. It is found in the cytoplasm. The enzyme catalyses ATP + H2O + cellular proteinSide 1 = ADP + phosphate + cellular proteinSide 2.. In terms of biological role, part of the Sec protein translocase complex. Interacts with the SecYEG preprotein conducting channel. Has a central role in coupling the hydrolysis of ATP to the transfer of proteins into and across the cell membrane, serving as an ATP-driven molecular motor driving the stepwise translocation of polypeptide chains across the membrane. Probably participates in protein translocation into and across both the cytoplasmic and thylakoid membranes in cyanobacterial cells. The protein is Protein translocase subunit SecA of Prochlorococcus marinus (strain MIT 9211).